We begin with the raw amino-acid sequence, 129 residues long: uncharacterized protein (129 aa).

This is an uncharacterized protein from Acheta domesticus (House cricket).